Consider the following 387-residue polypeptide: 3-ketoacyl-CoA thiolase (387 aa).

The Acyl-thioester intermediate role is filled by C91. Residues H343 and C373 each act as proton acceptor in the active site.

Belongs to the thiolase-like superfamily. Thiolase family. As to quaternary structure, heterotetramer of two alpha chains (FadB) and two beta chains (FadA).

Its subcellular location is the cytoplasm. It catalyses the reaction an acyl-CoA + acetyl-CoA = a 3-oxoacyl-CoA + CoA. Its pathway is lipid metabolism; fatty acid beta-oxidation. Catalyzes the final step of fatty acid oxidation in which acetyl-CoA is released and the CoA ester of a fatty acid two carbons shorter is formed. This Shewanella denitrificans (strain OS217 / ATCC BAA-1090 / DSM 15013) protein is 3-ketoacyl-CoA thiolase.